We begin with the raw amino-acid sequence, 343 residues long: Glucan endo-1,3-beta-glucosidase, acidic isoform GI9 (343 aa).

Residues 1-29 (MTLCIKNGFLAAALVLVGLLICSIQMIGA) form the signal peptide. Glutamine 30 is subject to Pyrrolidone carboxylic acid. The active-site Proton donor is the glutamate 124. The active-site Nucleophile is glutamate 264.

This sequence belongs to the glycosyl hydrolase 17 family.

It localises to the secreted. It is found in the extracellular space. The enzyme catalyses Hydrolysis of (1-&gt;3)-beta-D-glucosidic linkages in (1-&gt;3)-beta-D-glucans.. In terms of biological role, implicated in the defense of plants against pathogens. The polypeptide is Glucan endo-1,3-beta-glucosidase, acidic isoform GI9 (PR2) (Nicotiana tabacum (Common tobacco)).